The following is a 227-amino-acid chain: MISSKASDYQQRIGYVFTDPSLLLQALRHCSAGTPHNERLEFLGDSVVNLLIAEALFQRWPRADEGALTRARSELVRETSLASIARTMQLGEQLILGPGELKSGGHRRDSILADAVEAVIAAIYLDADLATCRTVVLPWFETALTALPVGKPEKDPKTRLQEWLQARQWSLPVYELIFESGDPHTKHFRVSCTLGELKLRTEGEGSSRRLAEQDAASHAIDQLDSNK.

One can recognise an RNase III domain in the interval 6–128 (ASDYQQRIGY…VIAAIYLDAD (123 aa)). Mg(2+) is bound at residue Glu-41. The active site involves Asp-45. Positions 114 and 117 each coordinate Mg(2+). The active site involves Glu-117. The 71-residue stretch at 155–225 (DPKTRLQEWL…ASHAIDQLDS (71 aa)) folds into the DRBM domain. Residues 203 to 212 (GEGSSRRLAE) are compositionally biased toward basic and acidic residues. Residues 203-227 (GEGSSRRLAEQDAASHAIDQLDSNK) are disordered.

Belongs to the ribonuclease III family. Homodimer. Requires Mg(2+) as cofactor.

The protein resides in the cytoplasm. It carries out the reaction Endonucleolytic cleavage to 5'-phosphomonoester.. Functionally, digests double-stranded RNA. Involved in the processing of primary rRNA transcript to yield the immediate precursors to the large and small rRNAs (23S and 16S). Processes some mRNAs, and tRNAs when they are encoded in the rRNA operon. Processes pre-crRNA and tracrRNA of type II CRISPR loci if present in the organism. The chain is Ribonuclease 3 from Xylella fastidiosa (strain 9a5c).